A 196-amino-acid chain; its full sequence is Putative 3-methyladenine DNA glycosylase (196 aa).

This sequence belongs to the DNA glycosylase MPG family.

The polypeptide is Putative 3-methyladenine DNA glycosylase (yxlJ) (Bacillus subtilis (strain 168)).